Here is a 67-residue protein sequence, read N- to C-terminus: DNA-directed RNA polymerase subunit omega (67 aa).

This sequence belongs to the RNA polymerase subunit omega family. The RNAP catalytic core consists of 2 alpha, 1 beta, 1 beta' and 1 omega subunit. When a sigma factor is associated with the core the holoenzyme is formed, which can initiate transcription.

The enzyme catalyses RNA(n) + a ribonucleoside 5'-triphosphate = RNA(n+1) + diphosphate. Functionally, promotes RNA polymerase assembly. Latches the N- and C-terminal regions of the beta' subunit thereby facilitating its interaction with the beta and alpha subunits. This chain is DNA-directed RNA polymerase subunit omega, found in Moorella thermoacetica (strain ATCC 39073 / JCM 9320).